The chain runs to 430 residues: Adenylosuccinate synthetase (430 aa).

GTP is bound by residues 12 to 18 and 40 to 42; these read GDEGKGK and GHT. Asp-13 serves as the catalytic Proton acceptor. Asp-13 and Gly-40 together coordinate Mg(2+). IMP contacts are provided by residues 13–16, 38–41, Thr-130, Arg-144, Gln-224, Thr-239, and Arg-303; these read DEGK and NAGH. Residue His-41 is the Proton donor of the active site. A substrate-binding site is contributed by 299 to 305; the sequence is VNTGRKR. Residues Arg-305, 331 to 333, and 413 to 415 contribute to the GTP site; these read KLD and STS.

This sequence belongs to the adenylosuccinate synthetase family. As to quaternary structure, homodimer. Mg(2+) is required as a cofactor.

It localises to the cytoplasm. The catalysed reaction is IMP + L-aspartate + GTP = N(6)-(1,2-dicarboxyethyl)-AMP + GDP + phosphate + 2 H(+). It functions in the pathway purine metabolism; AMP biosynthesis via de novo pathway; AMP from IMP: step 1/2. Plays an important role in the de novo pathway of purine nucleotide biosynthesis. Catalyzes the first committed step in the biosynthesis of AMP from IMP. The sequence is that of Adenylosuccinate synthetase from Rhodopseudomonas palustris (strain ATCC BAA-98 / CGA009).